Consider the following 257-residue polypeptide: Small ribosomal subunit protein eS1 (257 aa).

The segment at 236 to 257 (TSAEGEKIERPDDYEPPVQESV) is disordered. Residues 239–248 (EGEKIERPDD) show a composition bias toward basic and acidic residues.

Belongs to the eukaryotic ribosomal protein eS1 family. Component of the small ribosomal subunit. Mature ribosomes consist of a small (40S) and a large (60S) subunit. The 40S subunit contains about 33 different proteins and 1 molecule of RNA (18S). The 60S subunit contains about 49 different proteins and 3 molecules of RNA (28S, 5.8S and 5S).

The protein localises to the cytoplasm. In Brugia malayi (Filarial nematode worm), this protein is Small ribosomal subunit protein eS1.